The primary structure comprises 581 residues: MTDPDSYRSSITSRPSFNRTVTSSSQNYGAPGSGNRVLKIVTETHSSSVSSGLSPYGQNAASTIRDNREREKKEIMELNDRLASYIEKVRFLDAQNRKLDADLKMLQGRFGKSTGSVKVMYEMEITTATNVVKQTGKDHGETEKEIRKLQDQLDELRKKFEEAQRGRAEDRLKIDDLLVTLSNLEAEINLLKRRIALLEEEVARLKKENFRLTSELQRVRIELDQETLLRIDNQNKVKTILEEIDFMKRGFETELKELQAQAARDTTSENREYFKNELANAMRDIRAEYDQIMNGNRNDMESWYQLRVQEINTQSNRQNAENNYQKEEVKRLRNQTSELRQKLSDLESRNLLLEKQIEDLNYQLEDDQRSYEAALNDKDAQIRKLREECQALMVELQMLLDTKQTLDGELKVYRQMLEGNSEGNGLRQLVEKVVRTSAINEEADTETMRVVKGEHSSRTSYQRSAKGNVAIKETSPEGKFVILENTHRAKEEPLGDWKLKRKIDGKREIVFTFPSDYILHPFQSVKIFARGQGIANPPEVLIFEGDETFGVGANVQTILYNNKGEERATHIQRQSQQTTSS.

2 disordered regions span residues 1–35 and 47–68; these read MTDP…GSGN and SSVS…RDNR. The segment at 1–74 is head; sequence MTDPDSYRSS…RDNREREKKE (74 aa). Residues 7–28 are compositionally biased toward polar residues; sequence YRSSITSRPSFNRTVTSSSQNY. Positions 71-424 constitute an IF rod domain; it reads EKKEIMELND…QMLEGNSEGN (354 aa). A coil 1A region spans residues 75–106; it reads IMELNDRLASYIEKVRFLDAQNRKLDADLKML. Residues 107 to 120 are linker 1; sequence QGRFGKSTGSVKVM. The interval 121 to 258 is coil 1B; the sequence is YEMEITTATN…RGFETELKEL (138 aa). A linker 12 region spans residues 259–276; the sequence is QAQAARDTTSENREYFKN. Residues 277 to 424 are coil 2; that stretch reads ELANAMRDIR…QMLEGNSEGN (148 aa). Residues 425 to 578 form a tail region; that stretch reads GLRQLVEKVV…THIQRQSQQT (154 aa). Residues 449 to 469 form a disordered region; sequence RVVKGEHSSRTSYQRSAKGNV. One can recognise an LTD domain in the interval 457–574; that stretch reads SRTSYQRSAK…EERATHIQRQ (118 aa).

Belongs to the intermediate filament family. Forms some heteromeric filaments with ifb-1. In terms of tissue distribution, mainly expressed in regions of the hypodermis adjacent to muscle. Expressed in longitudinal stripes where the mechanosensory neurons interface with the hypodermis. Also expressed to the uterine seam and within the uterine-vulval cells.

It is found in the cell junction. The protein localises to the hemidesmosome. In terms of biological role, cytoplasmic intermediate filaments provide mechanical strength to cells. Essential protein, involved in attachment structures in epidermal cells that connect muscles to the external cuticle. Probably acts by forming hypodermal hemidesmosome complexes that help mediate muscle-cuticle force transduction. Although expressed during embryogenesis, it is not required for embryonic development of muscle-cuticle linkages nor for the localization of other proteins to the hemidesmosomes in embryos. The polypeptide is Intermediate filament protein ifa-2 (Caenorhabditis elegans).